Here is a 404-residue protein sequence, read N- to C-terminus: Formate-dependent phosphoribosylglycinamide formyltransferase (404 aa).

Residues 25–26 (EL) and glutamate 85 each bind N(1)-(5-phospho-beta-D-ribosyl)glycinamide. ATP is bound by residues arginine 118, lysine 159, 164 to 169 (SSGKGQ), 199 to 202 (EGFI), and glutamate 207. Positions 123-318 (RLAAEELGLP…EFELHARAIL (196 aa)) constitute an ATP-grasp domain. Residues glutamate 277 and glutamate 289 each coordinate Mg(2+). N(1)-(5-phospho-beta-D-ribosyl)glycinamide contacts are provided by residues aspartate 296, lysine 365, and 372-373 (RR).

This sequence belongs to the PurK/PurT family. As to quaternary structure, homodimer.

The enzyme catalyses N(1)-(5-phospho-beta-D-ribosyl)glycinamide + formate + ATP = N(2)-formyl-N(1)-(5-phospho-beta-D-ribosyl)glycinamide + ADP + phosphate + H(+). The protein operates within purine metabolism; IMP biosynthesis via de novo pathway; N(2)-formyl-N(1)-(5-phospho-D-ribosyl)glycinamide from N(1)-(5-phospho-D-ribosyl)glycinamide (formate route): step 1/1. Its function is as follows. Involved in the de novo purine biosynthesis. Catalyzes the transfer of formate to 5-phospho-ribosyl-glycinamide (GAR), producing 5-phospho-ribosyl-N-formylglycinamide (FGAR). Formate is provided by PurU via hydrolysis of 10-formyl-tetrahydrofolate. This is Formate-dependent phosphoribosylglycinamide formyltransferase from Burkholderia mallei (strain NCTC 10247).